The following is a 261-amino-acid chain: Phosphoadenosine phosphosulfate reductase (261 aa).

The protein belongs to the PAPS reductase family. CysH subfamily.

It catalyses the reaction [thioredoxin]-disulfide + sulfite + adenosine 3',5'-bisphosphate + 2 H(+) = [thioredoxin]-dithiol + 3'-phosphoadenylyl sulfate. It functions in the pathway sulfur metabolism; hydrogen sulfide biosynthesis; sulfite from sulfate: step 3/3. The NADP dependent reduction of PAPS into sulfite involves thioredoxin which probably plays the role of a thiol carrier. The protein is Phosphoadenosine phosphosulfate reductase (MET16) of Saccharomyces cerevisiae (strain ATCC 204508 / S288c) (Baker's yeast).